The sequence spans 399 residues: F-box protein At1g30790 (399 aa).

An F-box domain is found at 3–49 (RQEIDHIPFDLTVEILTRLPAKSLMKFKCVSKLWSSIIHNQSFIDSF).

This Arabidopsis thaliana (Mouse-ear cress) protein is F-box protein At1g30790.